A 179-amino-acid polypeptide reads, in one-letter code: NADH-quinone oxidoreductase subunit B (179 aa).

[4Fe-4S] cluster-binding residues include C35, C36, C100, and C129.

The protein belongs to the complex I 20 kDa subunit family. In terms of assembly, NDH-1 is composed of 14 different subunits. Subunits NuoB, C, D, E, F, and G constitute the peripheral sector of the complex. Requires [4Fe-4S] cluster as cofactor.

It is found in the cell inner membrane. The catalysed reaction is a quinone + NADH + 5 H(+)(in) = a quinol + NAD(+) + 4 H(+)(out). Functionally, NDH-1 shuttles electrons from NADH, via FMN and iron-sulfur (Fe-S) centers, to quinones in the respiratory chain. Couples the redox reaction to proton translocation (for every two electrons transferred, four hydrogen ions are translocated across the cytoplasmic membrane), and thus conserves the redox energy in a proton gradient. This is NADH-quinone oxidoreductase subunit B from Aquifex aeolicus (strain VF5).